The chain runs to 247 residues: MNVLSCSINTLKGLYDISGVEVGQHFYWQIGDFQVHGQVLITSWVVIAILLGSATLAVRNPQTIPTGGQNFFEYVLEFIRDMSKTQIGEEYGPWVPFIGTMFLFIFVSNWSGALLPWKIIQLPHGELAAPTNDINTTVALALLTSVAYFYAGLTKRGLSYFGKYIQPTPILLPINILEDFTKPLSLSFRLFGNILADELVVVVLVSLVPSVVPIPVMFLGLFTSGIQALIFATLAAAYIGESMEGHH.

A run of 5 helical transmembrane segments spans residues 38-58, 95-115, 134-154, 199-219, and 220-240; these read QVLI…TLAV, VPFI…GALL, INTT…AGLT, LVVV…VMFL, and GLFT…AYIG.

It belongs to the ATPase A chain family. In terms of assembly, F-type ATPases have 2 components, CF(1) - the catalytic core - and CF(0) - the membrane proton channel. CF(1) has five subunits: alpha(3), beta(3), gamma(1), delta(1), epsilon(1). CF(0) has four main subunits: a, b, b' and c.

The protein localises to the plastid. It localises to the chloroplast thylakoid membrane. In terms of biological role, key component of the proton channel; it plays a direct role in the translocation of protons across the membrane. The polypeptide is ATP synthase subunit a, chloroplastic (Jasminum nudiflorum (Winter jasmine)).